The sequence spans 187 residues: MVKTVYVTGYKSFELNIFKDDAPEIHYLKQFIKHKIEQLLDEGLEWVLIQGQMGIELWTTEVVIELQRTYDSLKFAVITPFQGHTEKWNEHNQSKYANIIKHADYVDSIFHTSYQGPFQFKQADQFMLEHSDQTLLIYDEEQEASPKFFKQMLVDFMDKTNYTCDIVTFDELTAFINDLQWSEDQSF.

The protein belongs to the UPF0398 family.

The protein is UPF0398 protein SAB1311c of Staphylococcus aureus (strain bovine RF122 / ET3-1).